The sequence spans 468 residues: MSPKTLYDKIWDAHVAHEADDGTTLLYIDRHLVHEVTSPQAFEGLRMTGRTVRAPDKTIAVPDHNVPTTLGREKADNMTEDSRIQVAALDTNAKEFGIHYYPVSDIRQGIVHIVGPEQGWTLPGMTVVCGDSHTATHGAFGALAHGIGTSEVEHVLATQTLIQKKSKNMKVEITGKLRPGVTAKDITLSVIGHTGTAGGTGYVIEYCGEAIRDLSMEGRMTVCNMAIEGGARAGLIAPDEKTFEYCMGRPHAPKGAQWEAAMSWWKTLYSDDDAHWDKVITIKGDDIAPVVTWGTSPEDVLPITASVPKPEDFTGGKVGAVQRSLEYMGLTSGTPLSEVEIDTVFIGSCTNGRIEDLRAAAEILKGKKKKDGLRAMVVPGSGLVRAQAEEEGLADIFKEAGFEWRLAGCSMCLAMNPDQLQPGERCAATSNRNFEGRQGRGGRTHLMSPAMAAAAAITGRLTDVRDLM.

Residues cysteine 349, cysteine 409, and cysteine 412 each coordinate [4Fe-4S] cluster.

It belongs to the aconitase/IPM isomerase family. LeuC type 1 subfamily. Heterodimer of LeuC and LeuD. It depends on [4Fe-4S] cluster as a cofactor.

It carries out the reaction (2R,3S)-3-isopropylmalate = (2S)-2-isopropylmalate. The protein operates within amino-acid biosynthesis; L-leucine biosynthesis; L-leucine from 3-methyl-2-oxobutanoate: step 2/4. In terms of biological role, catalyzes the isomerization between 2-isopropylmalate and 3-isopropylmalate, via the formation of 2-isopropylmaleate. In Roseobacter denitrificans (strain ATCC 33942 / OCh 114) (Erythrobacter sp. (strain OCh 114)), this protein is 3-isopropylmalate dehydratase large subunit.